We begin with the raw amino-acid sequence, 98 residues long: NADH-ubiquinone oxidoreductase chain 4L (98 aa).

The next 3 membrane-spanning stretches (helical) occupy residues 1 to 21 (MTLI…GFLM), 29 to 49 (ALLC…LTVL), and 59 to 79 (MPII…ALLV).

This sequence belongs to the complex I subunit 4L family. In terms of assembly, core subunit of respiratory chain NADH dehydrogenase (Complex I) which is composed of 45 different subunits.

The protein localises to the mitochondrion inner membrane. It catalyses the reaction a ubiquinone + NADH + 5 H(+)(in) = a ubiquinol + NAD(+) + 4 H(+)(out). Functionally, core subunit of the mitochondrial membrane respiratory chain NADH dehydrogenase (Complex I) which catalyzes electron transfer from NADH through the respiratory chain, using ubiquinone as an electron acceptor. Part of the enzyme membrane arm which is embedded in the lipid bilayer and involved in proton translocation. The chain is NADH-ubiquinone oxidoreductase chain 4L (MT-ND4L) from Inia geoffrensis (Amazon river dolphin).